Consider the following 227-residue polypeptide: Mediator of RNA polymerase II transcription subunit 18 (227 aa).

It belongs to the Mediator complex subunit 18 family. As to quaternary structure, component of the Mediator complex.

Its subcellular location is the nucleus. Its function is as follows. Component of the Mediator complex, a coactivator involved in the regulated transcription of nearly all RNA polymerase II-dependent genes. Mediator functions as a bridge to convey information from gene-specific regulatory proteins to the basal RNA polymerase II transcription machinery. Mediator is recruited to promoters by direct interactions with regulatory proteins and serves as a scaffold for the assembly of a functional preinitiation complex with RNA polymerase II and the general transcription factors. The chain is Mediator of RNA polymerase II transcription subunit 18 (mdt-18) from Caenorhabditis briggsae.